Consider the following 517-residue polypeptide: MANNNIMGIDFGTHFACVGIFKNERIEICPNQQGNRTTPSVVSFVGDDKLVGDEAKAQMDRNPLNTIYDVKRLLGRKTTDELFDHEVKKLSFKVTTYEDNNEKIEFQVNYKSNVVTLTPIEIATSILEQIKHTAETFIGGESIKKAVISVPTDFTEKQRNDLKEAATAAGITVVRMIHEHSAVALAYGYDQVKECSETTNESKESNVMVFDLGGSGVSASMIRVRSKLFEMIGNVSDHTVSGEHFDHVLVQHFTQEFNRKYRCDLTDNARSKAKLKSACEKAKRNLSNMTQAALEIDSLYDGRDFFTNITRARFEDMASGLIKGSINAVSQLLEKCNMTKEQVDKVLLVGGASRIPSVQNQLLNFFDNRQDILERSMNQEEVVAHGTTIQATILAADKSNQSLTCNSSNISMGAPFSAKFTPVTIGIQDSNGNLIPIIPSSSLIPCKRTFTLNTSSENQDNLNMAVYQGSAPLAKDNQLVSRFIFKSSPNPIDVTFEIDNNNTLLIKSEQANYSIKF.

This sequence belongs to the heat shock protein 70 family.

Its function is as follows. May function in protein folding and assembly, and disassembly of protein complexes. This Dictyostelium discoideum (Social amoeba) protein is Heat shock 70-related protein 5.